Consider the following 239-residue polypeptide: ATP synthase subunit a (239 aa).

5 helical membrane-spanning segments follow: residues 17 to 37, 75 to 95, 113 to 133, 182 to 202, and 206 to 226; these read GTVC…VYFF, FHLL…IGLI, DPFV…LFGV, LLTL…PLAI, and MVWI…FVTL.

This sequence belongs to the ATPase A chain family. As to quaternary structure, F-type ATPases have 2 components, CF(1) - the catalytic core - and CF(0) - the membrane proton channel. CF(1) has five subunits: alpha(3), beta(3), gamma(1), delta(1), epsilon(1). CF(0) has three main subunits: a(1), b(2) and c(9-12). The alpha and beta chains form an alternating ring which encloses part of the gamma chain. CF(1) is attached to CF(0) by a central stalk formed by the gamma and epsilon chains, while a peripheral stalk is formed by the delta and b chains.

Its subcellular location is the cell membrane. Key component of the proton channel; it plays a direct role in the translocation of protons across the membrane. This is ATP synthase subunit a from Enterococcus hirae (strain ATCC 9790 / DSM 20160 / JCM 8729 / LMG 6399 / NBRC 3181 / NCIMB 6459 / NCDO 1258 / NCTC 12367 / WDCM 00089 / R).